Reading from the N-terminus, the 194-residue chain is Cupin-domain-containing oxidoreductase virC (194 aa).

Positions 106-175 (IDFAPNVISP…GTLPGRMMWV (70 aa)) constitute a Cupin type-2 domain.

The protein belongs to the virC family.

It participates in secondary metabolite biosynthesis. Cupin-domain-containing oxidoreductase; part of the gene cluster that mediates the biosynthesis of virensols and trichoxide, fungal natural products that contain or are derived from a salicylaldehyde core. The pathway begins with the synthesis of the reduced chain in virensol C by the highly reducing polyketide synthase virA via condensation of one acetate and 8 malonate units. VirA has interesting programming rules since the first 2 ketides are fully reduced, the 3 following ketides undergo beta-dehydration, and the last 3 ketides are only reduced to beta-hydroxys to yield the trihydroxy portion. The production of aldehyde virensol C by virA alone is surprising, since virA does not contain a reductase (R) domain that is typically associated with reductive product release in HRPKS. The cupin-domain enzyme virC is involved in enhancing virA product turnover. The short-chain dehydrogenase virB then oxidizes the C-7 alcohol of virensol C to a ketone, yielding virensol D. Virensol D is further transformed to salicylaldehyde 5-deoxyaurocitrin by the short-chain dehydrogenase virD. VirD catalyzes the dehydrogenation of C-3 to form the beta-ketone aldehyde, which is followed by the generation of the nucleophilic C-2 that is required for the intramolecular aldol condensation between C-2 and C-7, itself followed by dehydration and aromatization which leads to salicylaldehyde 5-deoxyaurocitrin. While the dehydrogenation of virensol D is definitely catalyzed by virD, the aldol condensation and dehydration may be uncatalyzed or assisted by virD. The short chain dehydrogenase virG then converts salicylaldehyde 5-deoxyaurocitrin into virensol B which is further hydroxylated by the cytochrome P450 monooxygenase virE to yield the hydroquinone virensol A. VirI then may oxidize virensol A to form the quinone, while virH performs the epoxidation. Finally, the two remaining short-chain dehydrogenases, virK and virL, are probably responsible for reducing the ketones to the corresponding alcohols to furnish the epoxycyclohexanol structure in trichoxide. The chain is Cupin-domain-containing oxidoreductase virC from Hypocrea virens (strain Gv29-8 / FGSC 10586) (Gliocladium virens).